Here is a 76-residue protein sequence, read N- to C-terminus: cAMP-dependent protein kinase inhibitor alpha (76 aa).

The residue at position 2 (T2) is an N-acetylthreonine. The disordered stretch occupies residues K49–S76.

Belongs to the PKI family. In terms of tissue distribution, present at high levels in skeletal muscle and brain but is present at lower levels in heart, testis and liver.

In terms of biological role, extremely potent competitive inhibitor of cAMP-dependent protein kinase activity, this protein interacts with the catalytic subunit of the enzyme after the cAMP-induced dissociation of its regulatory chains. This chain is cAMP-dependent protein kinase inhibitor alpha (Pkia), found in Mus musculus (Mouse).